We begin with the raw amino-acid sequence, 129 residues long: Small ribosomal subunit protein uS11 (129 aa).

It belongs to the universal ribosomal protein uS11 family. Part of the 30S ribosomal subunit. Interacts with proteins S7 and S18. Binds to IF-3.

Located on the platform of the 30S subunit, it bridges several disparate RNA helices of the 16S rRNA. Forms part of the Shine-Dalgarno cleft in the 70S ribosome. The protein is Small ribosomal subunit protein uS11 of Hyphomonas neptunium (strain ATCC 15444).